Here is a 199-residue protein sequence, read N- to C-terminus: mRNA export protein mlo3 (199 aa).

Residues 1–41 (MSMELDQSLDAIIASKPKGGIRKRRARSNKPKPTKNAKPAV) form a disordered region. The segment covering 19-35 (GGIRKRRARSNKPKPTK) has biased composition (basic residues). Residues 55 to 134 (SKIIVSNLPT…RKMKVEIILD (80 aa)) enclose the RRM domain. Residues 144-199 (ARVSPASNASATASKNGAKSSKRKTTRRRRTPNRPKKSAEELDKEMDDYFGSNEKE) are disordered. Polar residues predominate over residues 148-161 (PASNASATASKNGA). Over residues 163–179 (SSKRKTTRRRRTPNRPK) the composition is skewed to basic residues.

As to quaternary structure, interacts with rpn15/dss1, mex67 and uap56.

The protein resides in the nucleus. Its function is as follows. Has a role in the mRNA export process. Interferes with mitotic chromosome segregation when overexpressed. The sequence is that of mRNA export protein mlo3 (mlo3) from Schizosaccharomyces pombe (strain 972 / ATCC 24843) (Fission yeast).